Here is a 1300-residue protein sequence, read N- to C-terminus: uncharacterized protein (1300 aa).

The tract at residues 1–1205 (MVLLRSGLGT…GKTLGLDPLY (1205 aa)) is disordered. Residues 51–69 (GRKRKKGPKKSGGKKKKRK) are compositionally biased toward basic residues. Over residues 73–143 (EGPGGGEGPG…GPGGGEGPGG (71 aa)) the composition is skewed to gly residues. Positions 145–165 (SRKRKRGDGSKKHGGKKKKKT) are enriched in basic residues. The segment covering 237–246 (PDGPGAQEGP) has biased composition (low complexity). Residues 250–270 (EGPEGDEGPEGPEGPEGEGPE) are compositionally biased toward acidic residues. The span at 280 to 289 (PDGPGAQEGP) shows a compositional bias: low complexity. Acidic residues-rich tracts occupy residues 295-343 (PDED…DSPD) and 357-417 (PDED…EGDS). Positions 418 to 427 (PDGPGAQEGP) are enriched in low complexity. Acidic residues-rich tracts occupy residues 431–469 (EGPE…PEGE), 477–494 (PEGE…EGPE), 517–558 (EGPE…EGPE), and 581–630 (EGPE…EGDS). Residues 674–686 (SGPGSSEGEGPSG) are compositionally biased toward gly residues. Acidic residues-rich tracts occupy residues 713–726 (PDED…DGTE), 736–749 (PDED…DGTE), 759–772 (PDED…EGTE), and 820–883 (SDDE…EEEV). The span at 903–917 (GEEKGEGEKGKGREE) shows a compositional bias: basic and acidic residues. 2 stretches are compositionally biased toward gly residues: residues 922–1010 (GGEG…GEGG) and 1021–1031 (GGEGGEGGEGG). The segment covering 1183–1195 (RPPKHHPQTKRAQ) has biased composition (basic residues).

This is an uncharacterized protein from Connochaetes taurinus (Blue wildebeest).